The following is a 60-amino-acid chain: ATP synthase subunit J, mitochondrial (60 aa).

A helical membrane pass occupies residues 13–32; the sequence is ILKPMLPFFLGGAIVFYGTV.

The protein belongs to the ATPase j subunit family. As to quaternary structure, F-type ATPases have 2 components, CF(1) - the catalytic core - and CF(0) - the membrane proton channel. In yeast, the dimeric form of ATP synthase consists of 17 polypeptides: alpha, beta, gamma, delta, epsilon, 4 (B), 5 (OSCP), 6 (A), 8, 9 (C), d, E (Tim11), f, g, h, i/j and k.

The protein resides in the mitochondrion membrane. Functionally, mitochondrial membrane ATP synthase (F(1)F(0) ATP synthase or Complex V) produces ATP from ADP in the presence of a proton gradient across the membrane which is generated by electron transport complexes of the respiratory chain. F-type ATPases consist of two structural domains, F(1) - containing the extramembraneous catalytic core and F(0) - containing the membrane proton channel, linked together by a central stalk and a peripheral stalk. During catalysis, ATP synthesis in the catalytic domain of F(1) is coupled via a rotary mechanism of the central stalk subunits to proton translocation. Part of the complex F(0) domain. Minor subunit located with subunit a in the membrane. The protein is ATP synthase subunit J, mitochondrial (atp18) of Schizosaccharomyces pombe (strain 972 / ATCC 24843) (Fission yeast).